The chain runs to 170 residues: Flavin reductase (170 aa).

Residues S51, H138, and F159–G162 each bind NAD(+).

Belongs to the non-flavoprotein flavin reductase family. Homodimer. Likely forms a loose transient complex with monooxygenases for which it provides FMNH(2).

It carries out the reaction FMNH2 + NAD(+) = FMN + NADH + 2 H(+). The catalysed reaction is FADH2 + NAD(+) = FAD + NADH + 2 H(+). Its function is as follows. Catalyzes the reduction of FMN, and to a lesser extent, FAD, using NADH as an electron donor. Is able to provide the FMNH(2) required for the Baeyer-Villiger oxidations catalyzed by 2,5-diketocamphane monooxygenases and 3,6-diketocamphane monooxygenase. NADPH acts as a very poor cosubstrate. The sequence is that of Flavin reductase from Pseudomonas putida (Arthrobacter siderocapsulatus).